The following is a 566-amino-acid chain: Urease subunit alpha (566 aa).

Residues 128–566 enclose the Urease domain; that stretch reads GGVDTHIHFI…LPMAQRYFLF (439 aa). His133, His135, and Lys216 together coordinate Ni(2+). Lys216 carries the post-translational modification N6-carboxylysine. His218 is a substrate binding site. His245 and His271 together coordinate Ni(2+). Catalysis depends on His319, which acts as the Proton donor. A Ni(2+)-binding site is contributed by Asp359.

Belongs to the metallo-dependent hydrolases superfamily. Urease alpha subunit family. As to quaternary structure, may form a heterohexamer of 3 UreC (alpha) and 3 UreAB (gamma/beta) subunits. May also form a heterotrimer of UreA (gamma), UreB (beta) and UreC (alpha) subunits. Three heterotrimers associate to form the active enzyme. The cofactor is Ni cation. Carboxylation allows a single lysine to coordinate two nickel ions.

Its subcellular location is the cytoplasm. It carries out the reaction urea + 2 H2O + H(+) = hydrogencarbonate + 2 NH4(+). It participates in nitrogen metabolism; urea degradation; CO(2) and NH(3) from urea (urease route): step 1/1. The chain is Urease subunit alpha from Pseudomonas syringae pv. tomato (strain ATCC BAA-871 / DC3000).